The following is a 532-amino-acid chain: Fatty-acid amide hydrolase 2 (532 aa).

The helical transmembrane segment at 11 to 31 (LFLLRALGFLIGLVGRAALVL) threads the bilayer. Active-site charge relay system residues include Lys-131 and Ser-206. The active-site Acyl-ester intermediate is the Ser-230.

It belongs to the amidase family. In terms of assembly, homodimer. In terms of tissue distribution, expressed in kidney, liver, lung, prostate, heart and ovary.

It localises to the membrane. The protein localises to the lipid droplet. The catalysed reaction is N-(5Z,8Z,11Z,14Z-eicosatetraenoyl)-ethanolamine + H2O = ethanolamine + (5Z,8Z,11Z,14Z)-eicosatetraenoate. The enzyme catalyses (9Z)-octadecenamide + H2O = (9Z)-octadecenoate + NH4(+). It catalyses the reaction N-(9Z-octadecenoyl) ethanolamine + H2O = ethanolamine + (9Z)-octadecenoate. It carries out the reaction N-hexadecanoylethanolamine + H2O = ethanolamine + hexadecanoate. Inhibited by O-aryl carbamates and alpha-keto heterocytes. Functionally, catalyzes the hydrolysis of endogenous amidated lipids like the sleep-inducing lipid oleamide ((9Z)-octadecenamide), the endocannabinoid anandamide (N-(5Z,8Z,11Z,14Z-eicosatetraenoyl)-ethanolamine), as well as other fatty amides, to their corresponding fatty acids, thereby regulating the signaling functions of these molecules. Hydrolyzes monounsaturated substrate anandamide preferentially as compared to polyunsaturated substrates. The sequence is that of Fatty-acid amide hydrolase 2 (FAAH2) from Homo sapiens (Human).